Here is an 870-residue protein sequence, read N- to C-terminus: Aminopeptidase N (870 aa).

Substrate contacts are provided by residues Glu121 and 261–265; that span reads GAMEN. Position 297 (His297) interacts with Zn(2+). Glu298 (proton acceptor) is an active-site residue. The Zn(2+) site is built by His301 and Glu320.

The protein belongs to the peptidase M1 family. Zn(2+) serves as cofactor.

The protein resides in the cell inner membrane. It catalyses the reaction Release of an N-terminal amino acid, Xaa-|-Yaa- from a peptide, amide or arylamide. Xaa is preferably Ala, but may be most amino acids including Pro (slow action). When a terminal hydrophobic residue is followed by a prolyl residue, the two may be released as an intact Xaa-Pro dipeptide.. Its function is as follows. Aminopeptidase N is involved in the degradation of intracellular peptides generated by protein breakdown during normal growth as well as in response to nutrient starvation. The chain is Aminopeptidase N (pepN) from Escherichia coli (strain K12).